The primary structure comprises 205 residues: Large ribosomal subunit protein bL21 (205 aa).

Residues 107-137 (APAKKAAAKKEEAPKADTAPKAAAAPTEEAA) form a disordered region. Residues 122–137 (ADTAPKAAAAPTEEAA) show a composition bias toward low complexity.

It belongs to the bacterial ribosomal protein bL21 family. In terms of assembly, part of the 50S ribosomal subunit. Contacts protein L20.

In terms of biological role, this protein binds to 23S rRNA in the presence of protein L20. The polypeptide is Large ribosomal subunit protein bL21 (Hyphomonas neptunium (strain ATCC 15444)).